An 888-amino-acid polypeptide reads, in one-letter code: Dilute domain-containing protein YPR089W (888 aa).

In terms of domain architecture, Dilute spans 360–745; it reads DIVLQSYWLS…KKFLNNKIKD (386 aa). 3 disordered regions span residues 462–504, 805–827, and 865–888; these read KEQQ…NNSS, KQRQ…TGDE, and LNIP…QNPW. Polar residues-rich tracts occupy residues 809–823 and 867–880; these read NEPQ…TSDF and IPSS…WSNN.

It is found in the golgi apparatus. The chain is Dilute domain-containing protein YPR089W from Saccharomyces cerevisiae (strain ATCC 204508 / S288c) (Baker's yeast).